The sequence spans 201 residues: Small ribosomal subunit protein uS4 (201 aa).

An S4 RNA-binding domain is found at S91–D151.

This sequence belongs to the universal ribosomal protein uS4 family. Part of the 30S ribosomal subunit. Contacts protein S5. The interaction surface between S4 and S5 is involved in control of translational fidelity.

Functionally, one of the primary rRNA binding proteins, it binds directly to 16S rRNA where it nucleates assembly of the body of the 30S subunit. With S5 and S12 plays an important role in translational accuracy. The sequence is that of Small ribosomal subunit protein uS4 from Corynebacterium kroppenstedtii (strain DSM 44385 / JCM 11950 / CIP 105744 / CCUG 35717).